The primary structure comprises 261 residues: Proteasome subunit alpha type-4 (261 aa).

Serine 13 and serine 75 each carry phosphoserine. Residue lysine 127 is modified to N6-acetyllysine. Serine 173 carries the post-translational modification Phosphoserine. An N6-acetyllysine modification is found at lysine 176. Residues 240–261 (HEEEEAKAEREKKEKEQKEKDK) form a disordered region.

The protein belongs to the peptidase T1A family. As to quaternary structure, the 26S proteasome consists of a 20S proteasome core and two 19S regulatory subunits. The 20S proteasome core is a barrel-shaped complex made of 28 subunits that are arranged in four stacked rings. The two outer rings are each formed by seven alpha subunits, and the two inner rings are formed by seven beta subunits. The proteolytic activity is exerted by three beta-subunits PSMB5, PSMB6 and PSMB7.

Its subcellular location is the cytoplasm. It localises to the nucleus. Its function is as follows. Component of the 20S core proteasome complex involved in the proteolytic degradation of most intracellular proteins. This complex plays numerous essential roles within the cell by associating with different regulatory particles. Associated with two 19S regulatory particles, forms the 26S proteasome and thus participates in the ATP-dependent degradation of ubiquitinated proteins. The 26S proteasome plays a key role in the maintenance of protein homeostasis by removing misfolded or damaged proteins that could impair cellular functions, and by removing proteins whose functions are no longer required. Associated with the PA200 or PA28, the 20S proteasome mediates ubiquitin-independent protein degradation. This type of proteolysis is required in several pathways including spermatogenesis (20S-PA200 complex) or generation of a subset of MHC class I-presented antigenic peptides (20S-PA28 complex). This chain is Proteasome subunit alpha type-4 (PSMA4), found in Bos taurus (Bovine).